A 595-amino-acid chain; its full sequence is P2X purinoceptor 7 (595 aa).

The Cytoplasmic segment spans residues 1-22; it reads MPACCSCSDVFQYETNKVTRIQ. Cys4 is lipidated: S-palmitoyl cysteine. The chain crosses the membrane as a helical span at residues 23–46; that stretch reads SMNYGTIKWFFHVIIFSYVCFALV. At 47–328 the chain is on the extracellular side; it reads SDKLYQRKEP…ILVFGTGGKF (282 aa). 3 disulfide bridges follow: Cys119-Cys168, Cys129-Cys152, and Cys135-Cys162. ADP-ribosylarginine occurs at positions 125 and 133. N-linked (GlcNAc...) asparagine glycosylation occurs at Asn187. Thr189 contributes to the ATP binding site. N-linked (GlcNAc...) asparagine glycosylation is found at Asn202 and Asn213. A disulfide bond links Cys216 and Cys226. The N-linked (GlcNAc...) asparagine glycan is linked to Asn241. An intrachain disulfide couples Cys260 to Cys269. Asn284 is a glycosylation site (N-linked (GlcNAc...) asparagine). Arg294 and Lys311 together coordinate ATP. The helical transmembrane segment at 329 to 353 threads the bilayer; the sequence is DIIQLVVYIGSTLSYFGLAAVFIDF. Ser342 is a Na(+) binding site. Tyr343 is modified (phosphotyrosine). Topologically, residues 354 to 595 are cytoplasmic; it reads LIDTYSSNCC…GQYSGFKSPY (242 aa). A C-cys anchor region spans residues 360–377; the sequence is SNCCRSHIYPWCKCCQPC. S-palmitoyl cysteine attachment occurs at residues Cys362, Cys363, Cys374, and Cys377. Ser390 carries the post-translational modification Phosphoserine. The tract at residues 395 to 595 is cytoplasmic ballast; it reads KPTLKYVSFV…GQYSGFKSPY (201 aa). Residues Cys479, Cys499, and Cys506 each contribute to the Zn(2+) site. 4 residues coordinate GTP: Arg546, His547, Tyr550, and Ala567. Zn(2+) is bound at residue Cys572. 3 residues coordinate GTP: Lys583, Ser589, and Gly590.

Belongs to the P2X receptor family. As to quaternary structure, homotrimers. Interacts with LAMA3, ITGB2, ACTB, ACTN4, SVIL, MPP3, HSPA1, HSPCB, HSPA8, PIK230 and PTPRB. Interacts (via C-terminus) with EMP2. Interacts with isoform B; this interaction potentiates P2RX7 responses. In terms of processing, phosphorylation results in its inactivation. Post-translationally, ADP-ribosylation at Arg-125 is necessary and sufficient to activate P2RX7 and gate the channel. Palmitoylation of several cysteines in the C-terminal cytoplasmic tail is required for efficient localization to cell surface. Palmitoylation prevents channel desensitization by physically anchoring the palmitoylated groups to the membrane. In terms of tissue distribution, widely expressed with highest levels in brain and immune tissues. Predominant form in many tissues.

It localises to the cell membrane. The enzyme catalyses Ca(2+)(in) = Ca(2+)(out). It carries out the reaction K(+)(in) = K(+)(out). The catalysed reaction is Na(+)(in) = Na(+)(out). With respect to regulation, activated by high extracellular ATP levels (0.1-2.5 mM). The synthetic analog 2'(3')-O-(4-benzoylbenzoyl)ATP (BzATP) acts as a potent agonist. Does not undergo desensitization, instead, undergoes a facilitation process where currents progressively increase with repetitive or prolonged agonist application. Palmitoylation prevents channel desensitization. The permeability of the P2RX7 channel is modulated by the amount of cholesterol in the plasma membrane. In terms of biological role, ATP-gated nonselective transmembrane cation channel that requires high millimolar concentrations of ATP for activation. Upon ATP binding, it rapidly opens to allow the influx of small cations Na(+) and Ca(2+), and the K(+) efflux. Also has the ability to form a large pore in the cell membrane, allowing the passage of large cationic molecules. In microglia, may mediate NADPH transport across the plasma membrane. In immune cells, P2RX7 acts as a molecular sensor in pathological inflammatory states by detecting and responding to high local concentrations of extracellar ATP. In microglial cells, P2RX7 activation leads to the release of pro-inflammatory cytokines, such as IL-1beta and IL-18, through the activation of the NLRP3 inflammasome and caspase-1. Cooperates with KCNK6 to activate NLRP3 inflammasome. Activates death pathways leading to apoptosis and autophagy. Activates death pathways leading to pyroptosis. Functionally, shows ion channel activity but no macropore function. Its function is as follows. Non-functional channel. The sequence is that of P2X purinoceptor 7 (P2RX7) from Homo sapiens (Human).